A 258-amino-acid chain; its full sequence is Zinc import ATP-binding protein ZnuC (258 aa).

Residues 7 to 233 (ITAKNINHAY…PAFQELFGQG (227 aa)) enclose the ABC transporter domain. 39–46 (GPNGAGKS) contacts ATP.

This sequence belongs to the ABC transporter superfamily. Zinc importer (TC 3.A.1.15.5) family. In terms of assembly, the complex is composed of two ATP-binding proteins (ZnuC), two transmembrane proteins (ZnuB) and a solute-binding protein (ZnuA).

The protein resides in the cell inner membrane. It catalyses the reaction Zn(2+)(out) + ATP(in) + H2O(in) = Zn(2+)(in) + ADP(in) + phosphate(in) + H(+)(in). Its function is as follows. Part of the ABC transporter complex ZnuABC involved in zinc import. Responsible for energy coupling to the transport system. This Hydrogenovibrio crunogenus (strain DSM 25203 / XCL-2) (Thiomicrospira crunogena) protein is Zinc import ATP-binding protein ZnuC.